A 33-amino-acid polypeptide reads, in one-letter code: Photosystem II reaction center protein Psb30 (33 aa).

The chain crosses the membrane as a helical span at residues 5 to 25; sequence VIAQLTVLSLIVLSGPLVIIL.

Belongs to the Psb30/Ycf12 family. PSII is composed of 1 copy each of membrane proteins PsbA, PsbB, PsbC, PsbD, PsbE, PsbF, PsbH, PsbI, PsbJ, PsbK, PsbL, PsbM, PsbT, PsbX, PsbY, PsbZ, Psb30/Ycf12, peripheral proteins of the oxygen-evolving complex and a large number of cofactors. It forms dimeric complexes.

The protein resides in the plastid. It localises to the chloroplast thylakoid membrane. Its function is as follows. A core subunit of photosystem II (PSII), probably helps stabilize the reaction center. This is Photosystem II reaction center protein Psb30 from Chlorokybus atmophyticus (Soil alga).